The chain runs to 299 residues: MSYGFVAYNLPKVQGTYRRGVKMHNATWFNVGGVAEVVFKPSSVEDLAAFVRDTNLPISVVGVASNLIVRDGIVKGVVVKLGREFSYINCNGNIITAGCATLLSNLAVAAQESGISGLEFFVGIPGTVGGAIEMNAGAYGGDVASVLRSVRAVNEHGEICTLSNDDMRYSYREHGLVGKWIFVDATFVGACGDRDAIKGTMREFIARRNDSQPVRGRTGGSTFKNPEGHQAWELIDKAGCRGLQIGGAQVSEKHCNFLLNCGGATAKDLEDLGNEIRCRVHSMFGIKLEWEIRFLGCGL.

One can recognise an FAD-binding PCMH-type domain in the interval 31–192 (VGGVAEVVFK…VDATFVGACG (162 aa)). The active site involves Arg-172. The active-site Proton donor is Ser-221. Glu-291 is a catalytic residue.

Belongs to the MurB family. The cofactor is FAD.

The protein resides in the cytoplasm. The catalysed reaction is UDP-N-acetyl-alpha-D-muramate + NADP(+) = UDP-N-acetyl-3-O-(1-carboxyvinyl)-alpha-D-glucosamine + NADPH + H(+). It participates in cell wall biogenesis; peptidoglycan biosynthesis. In terms of biological role, cell wall formation. This Anaplasma marginale (strain St. Maries) protein is UDP-N-acetylenolpyruvoylglucosamine reductase.